Reading from the N-terminus, the 519-residue chain is Sorting nexin-2 (519 aa).

A disordered region spans residues 1-104; the sequence is MAAEREPPPL…EPSPAVTPVT (104 aa). 2 stretches are compositionally biased toward low complexity: residues 27-50 and 93-104; these read LFTSTVSTLESSPSSPEPASLPAE and SSEPSPAVTPVT. Phosphoserine is present on S97. Residues T101 and T104 each carry the phosphothreonine modification. Phosphoserine is present on residues S117 and S119. Positions 140 to 269 constitute a PX domain; it reads FDIEIGVSDP…QFLESSELPR (130 aa). A 1,2-diacyl-sn-glycero-3-phospho-(1D-myo-inositol-3-phosphate) contacts are provided by R183, S185, K211, and R235. Phosphoserine is present on S185. Positions 260-519 are interaction with RhoG; the sequence is QFLESSELPR…AFLPEAKAIA (260 aa). S277 is subject to Phosphoserine. Positions 278 to 295 are membrane-binding amphipathic helix; sequence GAGILRMVNKAADAVNKM. The BAR domain occupies 299–519; it reads MNESDAWFEE…AFLPEAKAIA (221 aa). Position 469 is an N6-acetyllysine (K469).

Belongs to the sorting nexin family. As to quaternary structure, predominantly forms heterodimers with BAR domain-containing sorting nexins SNX5, SNX6 and SNX32; can self-associate to form homodimers. The heterodimers are proposed to self-assemble into helical arrays on the membrane to stabilize and expand local membrane curvature underlying endosomal tubule formation. Thought to be a component of the originally described retromer complex (also called SNX-BAR retromer) which is a pentamer containing the heterotrimeric retromer cargo-selective complex (CSC), also described as vacuolar protein sorting subcomplex (VPS), and a heterodimeric membrane-deforming subcomplex formed between SNX1 or SNX2 and SNX5 or SNX6 (also called SNX-BAR subcomplex); the respective CSC and SNX-BAR subcomplexes associate with low affinity. Interacts with SNX5, SNX6, SNX32, VPS26A, VPS29, VPS35, FNBP1, KALRN, RHOG (GDP-bound form).

It is found in the early endosome membrane. It localises to the cell projection. The protein localises to the lamellipodium. Functionally, involved in several stages of intracellular trafficking. Interacts with membranes containing phosphatidylinositol 3-phosphate (PtdIns(3P)) or phosphatidylinositol 3,5-bisphosphate (PtdIns(3,5)P2). Acts in part as component of the retromer membrane-deforming SNX-BAR subcomplex. The SNX-BAR retromer mediates retrograde transport of cargo proteins from endosomes to the trans-Golgi network (TGN) and is involved in endosome-to-plasma membrane transport for cargo protein recycling. The SNX-BAR subcomplex functions to deform the donor membrane into a tubular profile called endosome-to-TGN transport carrier (ETC). Can sense membrane curvature and has in vitro vesicle-to-membrane remodeling activity. Required for retrograde endosome-to-TGN transport of TGN38. Promotes KALRN- and RHOG-dependent but retromer-independent membrane remodeling such as lamellipodium formation; the function is dependent on GEF activity of KALRN. The sequence is that of Sorting nexin-2 (SNX2) from Homo sapiens (Human).